We begin with the raw amino-acid sequence, 642 residues long: Threonine--tRNA ligase (642 aa).

Residues 1 to 61 (MPVITLPDGS…ETDSDLSIIT (61 aa)) form the TGS domain. The segment at 243–534 (DHRKIGKQLD…LIEEYAGKFP (292 aa)) is catalytic. Zn(2+)-binding residues include cysteine 334, histidine 385, and histidine 511.

The protein belongs to the class-II aminoacyl-tRNA synthetase family. As to quaternary structure, homodimer. Requires Zn(2+) as cofactor.

The protein resides in the cytoplasm. The enzyme catalyses tRNA(Thr) + L-threonine + ATP = L-threonyl-tRNA(Thr) + AMP + diphosphate + H(+). Catalyzes the attachment of threonine to tRNA(Thr) in a two-step reaction: L-threonine is first activated by ATP to form Thr-AMP and then transferred to the acceptor end of tRNA(Thr). Also edits incorrectly charged L-seryl-tRNA(Thr). This chain is Threonine--tRNA ligase, found in Shewanella pealeana (strain ATCC 700345 / ANG-SQ1).